A 360-amino-acid chain; its full sequence is Photosystem II protein D1 (360 aa).

Transmembrane regions (helical) follow at residues 29–46 (YIGW…TATS), 118–133 (HFFI…EWEL), and 142–156 (WIAV…AATA). Histidine 118 is a chlorophyll a binding site. Residue tyrosine 126 coordinates pheophytin a. Residues aspartate 170 and glutamate 189 each contribute to the [CaMn4O5] cluster site. Residues 197–218 (FHMMGVAGVFGGSLFSAMHGSL) form a helical membrane-spanning segment. Residue histidine 198 participates in chlorophyll a binding. Residues histidine 215 and 264–265 (SF) contribute to the a quinone site. Fe cation is bound at residue histidine 215. A Fe cation-binding site is contributed by histidine 272. A helical transmembrane segment spans residues 274-288 (FLALWPVVCICVTAL). Residues histidine 332, glutamate 333, aspartate 342, and alanine 344 each coordinate [CaMn4O5] cluster. A propeptide spanning residues 345-360 (SEVSLPVALNKVEING) is cleaved from the precursor.

Belongs to the reaction center PufL/M/PsbA/D family. PSII is composed of 1 copy each of membrane proteins PsbA, PsbB, PsbC, PsbD, PsbE, PsbF, PsbH, PsbI, PsbJ, PsbK, PsbL, PsbM, PsbT, PsbY, PsbZ, Psb30/Ycf12, at least 3 peripheral proteins of the oxygen-evolving complex and a large number of cofactors. It forms dimeric complexes. The D1/D2 heterodimer binds P680, chlorophylls that are the primary electron donor of PSII, and subsequent electron acceptors. It shares a non-heme iron and each subunit binds pheophytin, quinone, additional chlorophylls, carotenoids and lipids. D1 provides most of the ligands for the Mn4-Ca-O5 cluster of the oxygen-evolving complex (OEC). There is also a Cl(-1) ion associated with D1 and D2, which is required for oxygen evolution. The PSII complex binds additional chlorophylls, carotenoids and specific lipids. is required as a cofactor. Tyr-161 forms a radical intermediate that is referred to as redox-active TyrZ, YZ or Y-Z. In terms of processing, C-terminally processed by CTPA; processing is essential to allow assembly of the oxygen-evolving complex and thus photosynthetic growth.

It localises to the plastid. Its subcellular location is the chloroplast thylakoid membrane. The enzyme catalyses 2 a plastoquinone + 4 hnu + 2 H2O = 2 a plastoquinol + O2. In terms of biological role, photosystem II (PSII) is a light-driven water:plastoquinone oxidoreductase that uses light energy to abstract electrons from H(2)O, generating O(2) and a proton gradient subsequently used for ATP formation. It consists of a core antenna complex that captures photons, and an electron transfer chain that converts photonic excitation into a charge separation. The D1/D2 (PsbA/PsbD) reaction center heterodimer binds P680, the primary electron donor of PSII as well as several subsequent electron acceptors. The sequence is that of Photosystem II protein D1 from Galdieria sulphuraria (Red alga).